The primary structure comprises 192 residues: Probable cobalt-precorrin-6B C(15)-methyltransferase (decarboxylating) (192 aa).

Residues Thr20, Gly44–Gly48, Glu68, and Ala96 contribute to the S-adenosyl-L-methionine site.

Belongs to the methyltransferase superfamily. Archaeal-type CbiT family.

It carries out the reaction Co-precorrin-6B + S-adenosyl-L-methionine = Co-precorrin-7 + S-adenosyl-L-homocysteine + CO2. The protein operates within cofactor biosynthesis; adenosylcobalamin biosynthesis; cob(II)yrinate a,c-diamide from sirohydrochlorin (anaerobic route): step 8/10. Its function is as follows. Catalyzes the methylation of C-15 in cobalt-precorrin-6B followed by the decarboxylation of C-12 to form cobalt-precorrin-7. The protein is Probable cobalt-precorrin-6B C(15)-methyltransferase (decarboxylating) of Sulfolobus acidocaldarius (strain ATCC 33909 / DSM 639 / JCM 8929 / NBRC 15157 / NCIMB 11770).